The chain runs to 316 residues: AAAGDVILEDVPGSVNLFNTLQDQITKVTAHVQDLTQKVRSSIYNTDKGLSFLELKDQLLLFYLQDLTHLMLEKTNGKSIKGNPGILRLVELRTVLEKMRPIDQKLKYQIDKLVKAAVTGSLGENDPLRFKPNPQNLMSKLSEPDERESDSGEEGAEGGVAKKPQSKVKRYIPPRLAPVHYDDTEAEREHRIVERAKKLALSSSTIRELKEQYSDAPEEIREGRAYHMMRHDKEEQHRINHEESMMVRLNMTRKEKARKKRVLSMTSQLNSLTHFSDISALTGGEGRAEDMVPFMKKSKKGPKKSKKKKGFSRRRH.

Disordered stretches follow at residues 124 to 169 (ENDP…SKVK) and 292 to 316 (VPFM…RRRH). Residues 145 to 156 (DERESDSGEEGA) are compositionally biased toward acidic residues. The span at 296-316 (KKSKKGPKKSKKKKGFSRRRH) shows a compositional bias: basic residues.

The protein belongs to the SAS10 family. In terms of assembly, part of the small subunit (SSU) processome, composed of more than 70 proteins and the RNA chaperone small nucleolar RNA (snoRNA) U3.

The protein resides in the nucleus. Its subcellular location is the nucleolus. It is found in the chromosome. The protein localises to the centromere. It localises to the cytoplasm. The protein resides in the cell projection. Its subcellular location is the axon. It is found in the dendrite. The protein localises to the filopodium. In terms of biological role, part of the small subunit (SSU) processome, first precursor of the small eukaryotic ribosomal subunit. During the assembly of the SSU processome in the nucleolus, many ribosome biogenesis factors, an RNA chaperone and ribosomal proteins associate with the nascent pre-rRNA and work in concert to generate RNA folding, modifications, rearrangements and cleavage as well as targeted degradation of pre-ribosomal RNA by the RNA exosome. Its dissociation from the complex determines the transition from state pre-A1 to state pre-A1*. May inhibit mRNA translation. The chain is Neuroguidin-B (ngdn-b) from Xenopus laevis (African clawed frog).